A 257-amino-acid polypeptide reads, in one-letter code: UPF0246 protein Rpic_2164 (257 aa).

This sequence belongs to the UPF0246 family.

This chain is UPF0246 protein Rpic_2164, found in Ralstonia pickettii (strain 12J).